The sequence spans 214 residues: Cell division protein B1 (214 aa).

In terms of biological role, part of a cell division machinery. The chain is Cell division protein B1 from Sulfolobus acidocaldarius (strain ATCC 33909 / DSM 639 / JCM 8929 / NBRC 15157 / NCIMB 11770).